The following is a 150-amino-acid chain: MIP18 family protein FAM96A (150 aa).

Belongs to the MIP18 family.

In terms of biological role, may play a role in chromosome segregation through establishment of sister chromatid cohesion. This Dictyostelium discoideum (Social amoeba) protein is MIP18 family protein FAM96A (fam96A).